We begin with the raw amino-acid sequence, 212 residues long: Thymidylate kinase (212 aa).

G11–T18 serves as a coordination point for ATP.

It belongs to the thymidylate kinase family.

The catalysed reaction is dTMP + ATP = dTDP + ADP. Its function is as follows. Phosphorylation of dTMP to form dTDP in both de novo and salvage pathways of dTTP synthesis. The sequence is that of Thymidylate kinase from Streptococcus pneumoniae serotype 2 (strain D39 / NCTC 7466).